The primary structure comprises 234 residues: Large ribosomal subunit protein uL1 (234 aa).

Belongs to the universal ribosomal protein uL1 family. Part of the 50S ribosomal subunit.

Binds directly to 23S rRNA. The L1 stalk is quite mobile in the ribosome, and is involved in E site tRNA release. In terms of biological role, protein L1 is also a translational repressor protein, it controls the translation of the L11 operon by binding to its mRNA. Its function is as follows. Peptides originating from the N-terminal end of L1 have antibacterial activity against bacteria such as E.coli and B.megaterium and modest antifungal activities. Has no effect on H.pylori itself. Peptides are not hemolytic against mammalian cells. These peptides may be released in the stomach during altruistic lysis to kill other fast growing bacteria. The chain is Large ribosomal subunit protein uL1 from Helicobacter pylori (strain ATCC 700392 / 26695) (Campylobacter pylori).